A 406-amino-acid chain; its full sequence is Accessory Sec system protein translocase subunit SecY2 (406 aa).

Transmembrane regions (helical) follow at residues 14–34 (SWTVLFLFIYVLGSHLVLPFI), 63–83 (FSLFSVGLSPWMSAMILWQMF), 108–128 (FAIALIQSLAVSLSLPIEVGI), 131–151 (GLAILTNTILLIAGTFFLVWL), 156–176 (SFFGIGGSIVILMASMVANLP), 190–210 (LPIILSLIIMGLLFLYIAVIV), 246–266 (FMYAISLVSIPQYLLILIQIL), 285–305 (PIWLVLYQVVLFVLGIAFAFV), 344–364 (AVIGAIYTVIMAGGPMMIVLI), and 368–388 (YLQLSMIPGMFLIYSGMVYNV).

The protein belongs to the SecY/SEC61-alpha family. SecY2 subfamily. In terms of assembly, component of the accessory SecA2/SecY2 protein translocase complex required to export cell wall proteins. May form heterotrimers with SecE and SecG subunits.

Its subcellular location is the cell membrane. Its function is as follows. Part of the accessory SecA2/SecY2 system specifically required for export of possible cell wall proteins. The central subunit of a protein translocation channel. This is Accessory Sec system protein translocase subunit SecY2 from Streptococcus salivarius (strain CCHSS3).